Reading from the N-terminus, the 334-residue chain is uncharacterized protein (334 aa).

It belongs to the PAPS reductase family.

This is an uncharacterized protein from Escherichia phage 186 (Bacteriophage 186).